Consider the following 275-residue polypeptide: MIELTDEILAKVIKKRKKASYKGTYGRLLVIGGNRQYGGAAILVTTSAVYSGAGLVSVALAKENHSALQARLPEAMTLDFDDLIKLREVAKAADVIVIGPGLGLERLDLLTEVLNLLTENQKLVIDGSALTLFAREHLDLPFPENTVFTPHEMELERLSGLKIGQQTKEEVQDFVNQLGAIVVAKSSETRIFAPNRESFILKIGSPAQATGGMGDTLAGMVGGFLAQFHGETEEVVAAATYLHSLIASVLARKTYVVLPSRLIEEIPLFMKKYEC.

The YjeF C-terminal domain occupies 5-273 (TDEILAKVIK…EEIPLFMKKY (269 aa)). (6S)-NADPHX-binding residues include Ala-40, Gly-103, and His-151. Gly-214 lines the AMP pocket. Asp-215 is a binding site for (6S)-NADPHX.

The protein belongs to the NnrD/CARKD family. In terms of assembly, homotetramer. Mg(2+) is required as a cofactor.

It carries out the reaction (6S)-NADHX + ADP = AMP + phosphate + NADH + H(+). It catalyses the reaction (6S)-NADPHX + ADP = AMP + phosphate + NADPH + H(+). Functionally, catalyzes the dehydration of the S-form of NAD(P)HX at the expense of ADP, which is converted to AMP. Together with NAD(P)HX epimerase, which catalyzes the epimerization of the S- and R-forms, the enzyme allows the repair of both epimers of NAD(P)HX, a damaged form of NAD(P)H that is a result of enzymatic or heat-dependent hydration. The protein is ADP-dependent (S)-NAD(P)H-hydrate dehydratase of Lactococcus lactis subsp. lactis (strain IL1403) (Streptococcus lactis).